An 85-amino-acid polypeptide reads, in one-letter code: Large ribosomal subunit protein bL27 (85 aa).

The segment at 1 to 22 (MAHKKAGGSTRNGRDSEAKRMG) is disordered.

Belongs to the bacterial ribosomal protein bL27 family.

This chain is Large ribosomal subunit protein bL27, found in Escherichia coli O6:K15:H31 (strain 536 / UPEC).